The following is a 549-amino-acid chain: Protein EPD1 (549 aa).

Positions Met1–Ala22 are cleaved as a signal peptide. 2 N-linked (GlcNAc...) asparagine glycosylation sites follow: Asn40 and Asn59. A disulfide bridge links Cys72 with Cys101. N-linked (GlcNAc...) asparagine glycans are attached at residues Asn147 and Asn163. 5 disulfides stabilise this stretch: Cys214/Cys347, Cys232/Cys263, Cys369/Cys420, Cys378/Cys444, and Cys397/Cys402. A compositionally biased stretch (polar residues) spans Ala336–Ala356. The segment at Ala336–Pro361 is disordered. Asn383 is a glycosylation site (N-linked (GlcNAc...) asparagine). N-linked (GlcNAc...) asparagine glycosylation is found at Asn408 and Asn438. A disordered region spans residues Ser479–Lys519. A compositionally biased stretch (low complexity) spans Ala487–Lys519.

This sequence belongs to the glycosyl hydrolase 72 family.

It localises to the cell membrane. This is Protein EPD1 (EPD1) from Candida maltosa (Yeast).